We begin with the raw amino-acid sequence, 177 residues long: Protein TERMINAL FLOWER 1 (177 aa).

The protein belongs to the phosphatidylethanolamine-binding protein family. Expressed below the apical dome of inflorescence and coflorescence meristems, and in inflorescence stem.

It is found in the cytoplasm. Its function is as follows. Controls inflorescence meristem identity and is required for maintenance of an indeterminate inflorescence. Prevents the expression of 'APETALA1' and 'LEAFY'. Also plays a role in the regulation of the time of flowering in the long-day flowering pathway. May form complexes with phosphorylated ligands by interfering with kinases and their effectors. The protein is Protein TERMINAL FLOWER 1 (TFL1) of Arabidopsis thaliana (Mouse-ear cress).